A 172-amino-acid chain; its full sequence is Adrenodoxin-like protein 1, mitochondrial (172 aa).

The 2Fe-2S ferredoxin-type domain occupies 57 to 159 (VNITYVDKDG…GMELELPKAT (103 aa)). [2Fe-2S] cluster contacts are provided by C94, C100, C103, and C140.

The protein belongs to the adrenodoxin/putidaredoxin family. Requires [2Fe-2S] cluster as cofactor.

The protein resides in the mitochondrion matrix. Required for ecdysteroidogenesis in the prothoracic gland which is necessary for larval to pupal transition. This chain is Adrenodoxin-like protein 1, mitochondrial, found in Drosophila melanogaster (Fruit fly).